Consider the following 201-residue polypeptide: Holliday junction resolvase RecU (201 aa).

The interval 1-26 is disordered; that stretch reads MAIGYPNGKKYAASQEELPQQKRKAP. Residues Thr87, Asp89, Glu102, and Gln121 each coordinate Mg(2+).

This sequence belongs to the RecU family. Mg(2+) serves as cofactor.

It is found in the cytoplasm. The enzyme catalyses Endonucleolytic cleavage at a junction such as a reciprocal single-stranded crossover between two homologous DNA duplexes (Holliday junction).. Its function is as follows. Endonuclease that resolves Holliday junction intermediates in genetic recombination. Cleaves mobile four-strand junctions by introducing symmetrical nicks in paired strands. Promotes annealing of linear ssDNA with homologous dsDNA. Required for DNA repair, homologous recombination and chromosome segregation. In Listeria monocytogenes serotype 4a (strain HCC23), this protein is Holliday junction resolvase RecU.